Consider the following 309-residue polypeptide: tRNA N6-adenosine threonylcarbamoyltransferase (309 aa).

The Fe cation site is built by His108 and His112. Substrate is bound by residues 130-134 (LVSGG), Asp163, Gly176, Asp180, and Asn269. Fe cation is bound at residue Asp293.

It belongs to the KAE1 / TsaD family. The cofactor is Fe(2+).

Its subcellular location is the cytoplasm. It carries out the reaction L-threonylcarbamoyladenylate + adenosine(37) in tRNA = N(6)-L-threonylcarbamoyladenosine(37) in tRNA + AMP + H(+). Required for the formation of a threonylcarbamoyl group on adenosine at position 37 (t(6)A37) in tRNAs that read codons beginning with adenine. Is involved in the transfer of the threonylcarbamoyl moiety of threonylcarbamoyl-AMP (TC-AMP) to the N6 group of A37, together with TsaE and TsaB. TsaD likely plays a direct catalytic role in this reaction. The polypeptide is tRNA N6-adenosine threonylcarbamoyltransferase (Mycoplasmopsis agalactiae (strain NCTC 10123 / CIP 59.7 / PG2) (Mycoplasma agalactiae)).